A 444-amino-acid polypeptide reads, in one-letter code: tRNA modification GTPase MnmE (444 aa).

(6S)-5-formyl-5,6,7,8-tetrahydrofolate is bound by residues Arg28, Glu86, and Arg126. Residues 224-368 (GFCVVLAGAP…LLDAIQGSAA (145 aa)) form the TrmE-type G domain. Residue Asn234 participates in K(+) binding. Residues 234–239 (NAGKST), 253–259 (SDIPGTT), and 278–281 (DTAG) contribute to the GTP site. Ser238 is a Mg(2+) binding site. Residues Ser253, Ile255, and Thr258 each coordinate K(+). Thr259 lines the Mg(2+) pocket. Position 444 (Lys444) interacts with (6S)-5-formyl-5,6,7,8-tetrahydrofolate.

Belongs to the TRAFAC class TrmE-Era-EngA-EngB-Septin-like GTPase superfamily. TrmE GTPase family. Homodimer. Heterotetramer of two MnmE and two MnmG subunits. It depends on K(+) as a cofactor.

The protein resides in the cytoplasm. Its function is as follows. Exhibits a very high intrinsic GTPase hydrolysis rate. Involved in the addition of a carboxymethylaminomethyl (cmnm) group at the wobble position (U34) of certain tRNAs, forming tRNA-cmnm(5)s(2)U34. This chain is tRNA modification GTPase MnmE, found in Methylorubrum populi (strain ATCC BAA-705 / NCIMB 13946 / BJ001) (Methylobacterium populi).